We begin with the raw amino-acid sequence, 530 residues long: Probable basic-leucine zipper transcription factor L (530 aa).

Low complexity-rich tracts occupy residues M1–S17 and S24–S39. Positions M1–K76 are disordered. Residues V55–L118 enclose the bZIP domain. Residues K56–K77 form a basic motif region. The tract at residues L83–I104 is leucine-zipper. 3 disordered regions span residues N142–V177, S216–P258, and H389–N481. 2 stretches are compositionally biased toward low complexity: residues R149–P176 and N220–N247. A compositionally biased stretch (polar residues) spans L248–T257. Residues S436 to S478 are compositionally biased toward low complexity.

It belongs to the bZIP family.

It localises to the nucleus. Functionally, probable transcriptional regulator. The polypeptide is Probable basic-leucine zipper transcription factor L (bzpL) (Dictyostelium discoideum (Social amoeba)).